A 116-amino-acid chain; its full sequence is uncharacterized protein (116 aa).

The 55-residue stretch at 6 to 60 (LKKCRKQKKLTQQNMADKLGITRPAYTAYELGSREPDYKTLINISNILDVSLDYL) folds into the HTH cro/C1-type domain. Positions 17 to 36 (QQNMADKLGITRPAYTAYEL) form a DNA-binding region, H-T-H motif.

This is an uncharacterized protein from Bacillus subtilis (strain 168).